We begin with the raw amino-acid sequence, 147 residues long: MDTLTAIGRWLAKQHVVTWCVHHEGELWCANAFYLFDAQNVALYLLTDDKTRHAQMSGACAPVAGTVNGQPKTVARIRGVQFKGEIRRLEGQESDAVRKAYLRRFPVARVLPAPVWEIRLDEIKFTDNTLGFGKKLHWLRDSRAQQA.

The protein belongs to the UPF0306 family.

The chain is UPF0306 protein YhbP from Salmonella choleraesuis (strain SC-B67).